The primary structure comprises 364 residues: Histidinol-phosphate aminotransferase 1 (364 aa).

K211 carries the post-translational modification N6-(pyridoxal phosphate)lysine.

It belongs to the class-II pyridoxal-phosphate-dependent aminotransferase family. Histidinol-phosphate aminotransferase subfamily. As to quaternary structure, homodimer. The cofactor is pyridoxal 5'-phosphate.

It carries out the reaction L-histidinol phosphate + 2-oxoglutarate = 3-(imidazol-4-yl)-2-oxopropyl phosphate + L-glutamate. Its pathway is amino-acid biosynthesis; L-histidine biosynthesis; L-histidine from 5-phospho-alpha-D-ribose 1-diphosphate: step 7/9. The protein is Histidinol-phosphate aminotransferase 1 of Legionella pneumophila subsp. pneumophila (strain Philadelphia 1 / ATCC 33152 / DSM 7513).